Here is a 496-residue protein sequence, read N- to C-terminus: ATP synthase subunit beta, chloroplastic (496 aa).

Residue 170 to 177 (GGAGVGKT) participates in ATP binding.

It belongs to the ATPase alpha/beta chains family. As to quaternary structure, F-type ATPases have 2 components, CF(1) - the catalytic core - and CF(0) - the membrane proton channel. CF(1) has five subunits: alpha(3), beta(3), gamma(1), delta(1), epsilon(1). CF(0) has four main subunits: a(1), b(1), b'(1) and c(9-12).

It localises to the plastid. Its subcellular location is the chloroplast thylakoid membrane. It catalyses the reaction ATP + H2O + 4 H(+)(in) = ADP + phosphate + 5 H(+)(out). Its function is as follows. Produces ATP from ADP in the presence of a proton gradient across the membrane. The catalytic sites are hosted primarily by the beta subunits. The protein is ATP synthase subunit beta, chloroplastic of Dioscorea elephantipes (Elephant's foot yam).